The sequence spans 287 residues: Beta-lactamase GES-1 (287 aa).

The N-terminal stretch at 1–18 (MRFIHALLLAGIAHSAYA) is a signal peptide. Cysteines 63 and 233 form a disulfide. Residue Ser-64 is the Nucleophile; acyl-ester intermediate of the active site. The a beta-lactam site is built by Lys-67, Ser-125, Glu-161, and Thr-232.

It belongs to the class-A beta-lactamase family. Monomer. May form dimers.

The catalysed reaction is a beta-lactam + H2O = a substituted beta-amino acid. Its activity is regulated as follows. Inhibited by the beta-lactamase-blocking agents clavulanic acid, tazobactam, sulbactam and tazobactam and the carbapenem, imipenem. Inhibition by imipenem may involve Gly-165. Functionally, extended-spectrum beta-lactamase (ESBL) which confers resistance to penicillins, as well as first, second, third and fourth-generation cephalosporins. Has ceftazidime-hydrolyzing activity. Inactive against the carbapenems, imipenem, meropenem, ertapenem and doripenem. However, weak hydrolytic activity with respect to imipenem has also been reported. This Klebsiella pneumoniae protein is Beta-lactamase GES-1.